A 392-amino-acid chain; its full sequence is Gastricsin (392 aa).

An N-terminal signal peptide occupies residues 1–16 (MKWMVVALLCLPLLEA). The propeptide at 17-62 (SLLRVPLRKMKSIRETMKEQGVLKDFLKTHKYDPGQKYHFGNFGDY) is activation peptide. The Peptidase A1 domain occupies 76 to 389 (YFGEISIGTP…DMGNNKVGLA (314 aa)). Residue D94 is part of the active site. Cystine bridges form between C107/C112 and C270/C275. D280 is an active-site residue. C314 and C347 are joined by a disulfide.

This sequence belongs to the peptidase A1 family.

Its subcellular location is the secreted. It catalyses the reaction More restricted specificity than pepsin A, but shows preferential cleavage at Tyr-|-Xaa bonds. High activity on hemoglobin.. Functionally, hydrolyzes a variety of proteins. This chain is Gastricsin (Pgc), found in Rattus norvegicus (Rat).